Reading from the N-terminus, the 144-residue chain is MNEELQNQFMALDVYNQQVQKLQEELSNIDMMIMELLKSIESMEGLKTSKEILLPLGAGAFVNAQVQNPEKIVLSVGVDVLLEKDVDEVIVDFQKSVEELEQTKELVNTQIQKTNQEIVKLRSELEKRAAAIEQRSAQMKPRTN.

This sequence belongs to the prefoldin alpha subunit family. In terms of assembly, heterohexamer of two alpha and four beta subunits.

The protein localises to the cytoplasm. Functionally, molecular chaperone capable of stabilizing a range of proteins. Seems to fulfill an ATP-independent, HSP70-like function in archaeal de novo protein folding. The protein is Prefoldin subunit alpha of Methanococcus maripaludis (strain C5 / ATCC BAA-1333).